Reading from the N-terminus, the 512-residue chain is 2,3-bisphosphoglycerate-independent phosphoglycerate mutase (512 aa).

Mn(2+) contacts are provided by aspartate 12 and serine 62. Catalysis depends on serine 62, which acts as the Phosphoserine intermediate. Substrate-binding positions include histidine 123, 153-154, arginine 185, arginine 191, 260-263, and lysine 333; these read RD and RPDR. Aspartate 400, histidine 404, aspartate 441, histidine 442, and histidine 460 together coordinate Mn(2+).

The protein belongs to the BPG-independent phosphoglycerate mutase family. Monomer. The cofactor is Mn(2+).

It carries out the reaction (2R)-2-phosphoglycerate = (2R)-3-phosphoglycerate. It participates in carbohydrate degradation; glycolysis; pyruvate from D-glyceraldehyde 3-phosphate: step 3/5. Its function is as follows. Catalyzes the interconversion of 2-phosphoglycerate and 3-phosphoglycerate. This is 2,3-bisphosphoglycerate-independent phosphoglycerate mutase from Clostridium perfringens (strain ATCC 13124 / DSM 756 / JCM 1290 / NCIMB 6125 / NCTC 8237 / Type A).